A 95-amino-acid polypeptide reads, in one-letter code: MKNEGEKEGLNISRCRVCKPGSTLINKTGGWRNFRPVYIYEKCTKCGICHIVCPDMSVKPRENGFFEYDYDYCKGCGICANECPADAIEMILEEK.

2 consecutive 4Fe-4S ferredoxin-type domains span residues 34–63 (FRPV…PREN) and 64–93 (GFFE…MILE). [4Fe-4S] cluster contacts are provided by C43, C46, C49, C53, C73, C76, C79, and C83.

Heterotetramer of one alpha, one beta, one delta and one gamma chain. It depends on [4Fe-4S] cluster as a cofactor.

The protein is Pyruvate synthase subunit PorD (porD) of Methanosarcina barkeri (strain Fusaro / DSM 804).